Reading from the N-terminus, the 145-residue chain is Ribonuclease P protein component (145 aa).

Positions 121–145 (PAAAGTMPPARTVHPSSLSPTEPEL) are disordered. Over residues 134-145 (HPSSLSPTEPEL) the composition is skewed to polar residues.

This sequence belongs to the RnpA family. As to quaternary structure, consists of a catalytic RNA component (M1 or rnpB) and a protein subunit.

It catalyses the reaction Endonucleolytic cleavage of RNA, removing 5'-extranucleotides from tRNA precursor.. In terms of biological role, RNaseP catalyzes the removal of the 5'-leader sequence from pre-tRNA to produce the mature 5'-terminus. It can also cleave other RNA substrates such as 4.5S RNA. The protein component plays an auxiliary but essential role in vivo by binding to the 5'-leader sequence and broadening the substrate specificity of the ribozyme. In Xanthomonas axonopodis pv. citri (strain 306), this protein is Ribonuclease P protein component.